Consider the following 209-residue polypeptide: A-type ATP synthase subunit D (209 aa).

The protein belongs to the V-ATPase D subunit family. Has multiple subunits with at least A(3), B(3), C, D, E, F, H, I and proteolipid K(x).

The protein resides in the cell membrane. In terms of biological role, component of the A-type ATP synthase that produces ATP from ADP in the presence of a proton gradient across the membrane. This is A-type ATP synthase subunit D from Archaeoglobus fulgidus (strain ATCC 49558 / DSM 4304 / JCM 9628 / NBRC 100126 / VC-16).